Here is an 85-residue protein sequence, read N- to C-terminus: Beta-insect depressant toxin Lqh-dprIT3b (85 aa).

An N-terminal signal peptide occupies residues 1–21; that stretch reads MKLLLLLTISASMLIEGLVNA. In terms of domain architecture, LCN-type CS-alpha/beta spans 22 to 82; the sequence is DGYIRGGDGC…EWDYETNTCG (61 aa). 4 cysteine pairs are disulfide-bonded: C31-C81, C35-C56, C42-C63, and C46-C65. The residue at position 82 (G82) is a Glycine amide.

Belongs to the long (4 C-C) scorpion toxin superfamily. Sodium channel inhibitor family. Beta subfamily. As to expression, expressed by the venom gland.

It localises to the secreted. In terms of biological role, depressant insect beta-toxins cause a transient contraction paralysis followed by a slow flaccid paralysis. They bind voltage-independently at site-4 of sodium channels (Nav) and block action potentials, primarily by depolarizing the axonal membrane and suppressing the sodium current. This depressant toxin is active only on insects. It is found in a relatively small amount in the venom, and its activity on insects is 10-fold higher compared to other known depressant toxins. In Leiurus hebraeus (Hebrew deathstalker scorpion), this protein is Beta-insect depressant toxin Lqh-dprIT3b.